The primary structure comprises 206 residues: Ribosomal RNA small subunit methyltransferase G (206 aa).

S-adenosyl-L-methionine contacts are provided by residues G74, L79, 125–126, and R140; that span reads VE.

This sequence belongs to the methyltransferase superfamily. RNA methyltransferase RsmG family.

Its subcellular location is the cytoplasm. The enzyme catalyses guanosine(527) in 16S rRNA + S-adenosyl-L-methionine = N(7)-methylguanosine(527) in 16S rRNA + S-adenosyl-L-homocysteine. Specifically methylates the N7 position of guanine in position 527 of 16S rRNA. The sequence is that of Ribosomal RNA small subunit methyltransferase G from Shewanella amazonensis (strain ATCC BAA-1098 / SB2B).